Reading from the N-terminus, the 2565-residue chain is Transformation/transcription domain-associated protein (2565 aa).

A phosphoserine mark is found at Ser-328, Ser-749, and Ser-775. The interaction with TP53 stretch occupies residues 710 to 1087 (SEVVIKWELQ…SPMAANQTPT (378 aa)). The Bipartite nuclear localization signal motif lies at 745-760 (KRGLSVDSAQEVKRFR). Lys-1242 is covalently cross-linked (Glycyl lysine isopeptide (Lys-Gly) (interchain with G-Cter in SUMO2)). Positions 1242-1253 (KQEPRERENSES) are enriched in basic and acidic residues. The tract at residues 1242–1277 (KQEPRERENSESKEEDVEIDIELAPGDQTSTPKTKE) is disordered. One can recognise an FAT domain in the interval 1391-1963 (VLKYLGKTHN…YFPIRTLYLT (573 aa)). Lys-1766 is subject to N6-acetyllysine. The interval 1973–1995 (KSDSGQQQPSSAGNQSHSASDPG) is disordered. The span at 1975–1991 (DSGQQQPSSAGNQSHSA) shows a compositional bias: polar residues. The PI3K/PI4K catalytic domain maps to 2206–2529 (MPRVEIVQKH…AVTAIMTRLH (324 aa)). The G-loop stretch occupies residues 2212-2218 (VQKHNTA). A catalytic loop region spans residues 2393 to 2401 (HLNRLNPEM). Residues 2413-2438 (VAYFRFDINDATGDLDANRPVPFRLT) form an activation loop region. Residues 2533 to 2565 (QFDGGESKVNTLVAAANSLDNLCRMDPAWHPWL) enclose the FATC domain.

This sequence belongs to the PI3/PI4-kinase family. TRA1 subfamily. As to quaternary structure, interacts with MYC, E2F1 and E2F4 transcription factors. Interacts directly with p53/TP53. Interacts with GCN5L2. Component of various HAT complexes. Component of the PCAF complex, at least composed of TADA2L/ADA2, SUPT3H, TADA3L/ADA3, TAF5L/PAF65-beta, TAF6L/PAF65-alpha, TAF10/TAFII30, TAF12/TAFII20, TAF9/TAFII31 and TRRAP. Component of the TFTC-HAT complex, at least composed of TAF5L, TAF6L, TADA3L, SUPT3H/SPT3, TAF2/TAFII150, TAF4/TAFII135, TAF5/TAFII100, GCN5L2/GCN5, TAF10 and TRRAP. Component of the NuA4 histone acetyltransferase complex which contains the catalytic subunit KAT5/TIP60 and the subunits EP400, TRRAP/PAF400, BRD8/SMAP, EPC1, DMAP1/DNMAP1, RUVBL1/TIP49, RUVBL2, ING3, actin, ACTL6A/BAF53A, MORF4L1/MRG15, MORF4L2/MRGX, MRGBP, YEATS4/GAS41, VPS72/YL1 and MEAF6. Component of the STAGA complex, at least composed of SUPT3H, GCN5L2, SUPT7L, TAF5L, TAF6L, TADA3L, TAD1L, TAF10, TAF12, TRRAP and TAF9. The STAGA core complex is associated with a subcomplex required for histone deubiquitination composed of ATXN7L3, ENY2 and USP22. Component of the BAF53 complex, at least composed of BAF53A, RUVBL1, SMARCA4/BRG1, and TRRAP, which preferentially acetylates histone H4 (and H2A) within nucleosomes. Interacts with NPAT. Interaction with TELO2 and TTI1. Component of a SWR1-like complex. In terms of tissue distribution, expressed in the cochlea.

It is found in the nucleus. Adapter protein, which is found in various multiprotein chromatin complexes with histone acetyltransferase activity (HAT), which gives a specific tag for epigenetic transcription activation. Component of the NuA4 histone acetyltransferase complex which is responsible for acetylation of nucleosomal histones H4 and H2A. Plays a central role in MYC transcription activation, and also participates in cell transformation by MYC. Required for p53/TP53-, E2F1- and E2F4-mediated transcription activation. Probably acts by linking transcription factors such as E1A, MYC or E2F1 to HAT complexes such as STAGA thereby allowing transcription activation. Probably not required in the steps following histone acetylation in processes of transcription activation. May be required for the mitotic checkpoint and normal cell cycle progression. Component of a SWR1-like complex that specifically mediates the removal of histone H2A.Z/H2AZ1 from the nucleosome. May play a role in the formation and maintenance of the auditory system. The protein is Transformation/transcription domain-associated protein (Trrap) of Mus musculus (Mouse).